Reading from the N-terminus, the 465-residue chain is Methylenetetrahydrofolate--tRNA-(uracil-5-)-methyltransferase TrmFO (465 aa).

FAD is bound at residue 10 to 15 (GAGLAG).

Belongs to the MnmG family. TrmFO subfamily. The cofactor is FAD.

The protein localises to the cytoplasm. The enzyme catalyses uridine(54) in tRNA + (6R)-5,10-methylene-5,6,7,8-tetrahydrofolate + NADH + H(+) = 5-methyluridine(54) in tRNA + (6S)-5,6,7,8-tetrahydrofolate + NAD(+). It catalyses the reaction uridine(54) in tRNA + (6R)-5,10-methylene-5,6,7,8-tetrahydrofolate + NADPH + H(+) = 5-methyluridine(54) in tRNA + (6S)-5,6,7,8-tetrahydrofolate + NADP(+). In terms of biological role, catalyzes the folate-dependent formation of 5-methyl-uridine at position 54 (M-5-U54) in all tRNAs. This is Methylenetetrahydrofolate--tRNA-(uracil-5-)-methyltransferase TrmFO from Deinococcus radiodurans (strain ATCC 13939 / DSM 20539 / JCM 16871 / CCUG 27074 / LMG 4051 / NBRC 15346 / NCIMB 9279 / VKM B-1422 / R1).